Here is a 432-residue protein sequence, read N- to C-terminus: Neuropeptide FF receptor 1 (432 aa).

Over 1–43 (MEAEPSQPPNGSWPLGQNGSDVETSMATSLTFSSYYQHSSPVA) the chain is Extracellular. N-linked (GlcNAc...) asparagine glycans are attached at residues Asn-10 and Asn-18. The helical transmembrane segment at 44–64 (AMFIAAYVLIFLLCMVGNTLV) threads the bilayer. The Cytoplasmic portion of the chain corresponds to 65–80 (CFIVLKNRHMRTVTNM). The helical transmembrane segment at 81 to 101 (FILNLAVSDLLVGIFCMPTTL) threads the bilayer. Over 102–117 (VDNLITGWPFDNATCK) the chain is Extracellular. Residue Asn-113 is glycosylated (N-linked (GlcNAc...) asparagine). Cys-116 and Cys-203 are disulfide-bonded. The helical transmembrane segment at 118–138 (MSGLVQGMSVSASVFTLVAIA) threads the bilayer. The Cytoplasmic segment spans residues 139 to 158 (VERFRCIVHPFREKLTLRKA). The chain crosses the membrane as a helical span at residues 159–179 (LFTIAVIWALALLIMCPSAVT). Residues 180 to 214 (LTVTREEHHFMLDARNRSYPLYSCWEAWPEKGMRK) lie on the Extracellular side of the membrane. Asn-195 carries an N-linked (GlcNAc...) asparagine glycan. A helical transmembrane segment spans residues 215–235 (VYTAVLFAHIYLVPLALIVVM). Residues 236–273 (YVRIARKLCQAPGPARDTEEAVAEGGRTSRRRARVVHM) lie on the Cytoplasmic side of the membrane. The helical transmembrane segment at 274–294 (LVMVALFFTLSWLPLWVLLLL) threads the bilayer. Residues 295 to 309 (IDYGELSELQLHLLS) are Extracellular-facing. Residues 310 to 330 (VYAFPLAHWLAFFHSSANPII) traverse the membrane as a helical segment. Over 331–432 (YGYFNENFRR…MPLTIPAWNI (102 aa)) the chain is Cytoplasmic. The segment covering 380-406 (PSDSGLPSESGPSSGVPGPGRLPLRNG) has biased composition (low complexity). A disordered region spans residues 380–422 (PSDSGLPSESGPSSGVPGPGRLPLRNGRVAHQDGPGEGPGCNH).

Belongs to the G-protein coupled receptor 1 family. As to expression, expressed at high levels in the hypothalamus. Moderate levels found in the midbrain, thalamus, medulla oblongata, testis, eye, whole brain, cerebral cortex, striatum, hippocampus, cerebellum, optic nerve, placenta, spinal cord, pituitary gland and ovary.

Its subcellular location is the cell membrane. Receptor for NPAF (A-18-F-amide) and NPFF (F-8-F-amide) neuropeptides, also known as morphine-modulating peptides. Can also be activated by a variety of naturally occurring or synthetic FMRF-amide like ligands. This receptor mediates its action by association with G proteins that activate a phosphatidylinositol-calcium second messenger system. This Rattus norvegicus (Rat) protein is Neuropeptide FF receptor 1 (Npffr1).